The chain runs to 947 residues: Protein NETWORKED 2A (947 aa).

The NAB domain occupies 10–90 (YSWWWASHIR…ERYDHLSREL (81 aa)). A disordered region spans residues 105 to 131 (VQFPLEDDSDENEDYDGRPRKPPKHLH). The segment covering 109–118 (LEDDSDENED) has biased composition (acidic residues). Coiled-coil stretches lie at residues 348-454 (KLAE…IQDV) and 568-619 (VLRD…QKLD). Basic and acidic residues-rich tracts occupy residues 618–627 (LDTTGKDSPH) and 635–644 (LEHEQGHHET). Disordered regions lie at residues 618-675 (LDTT…RTKS), 743-763 (RIESKQQQESPRSSSNTAVAS), and 911-947 (KNRQQKQSASSLFSCVSPSPGLHKQSSYSRPPGKLPE). Over residues 645-660 (VSISPTSNFSVATTPH) the composition is skewed to polar residues. The segment covering 662-675 (QVGDVKRTPGRTKS) has biased composition (basic and acidic residues). A coiled-coil region spans residues 722 to 809 (VHQIQKYQTT…LANIQEEIAR (88 aa)). Polar residues-rich tracts occupy residues 749 to 761 (QQESPRSSSNTAV) and 915 to 927 (QKQSASSLFSCVS).

Belongs to the NET family. As to expression, expressed specifically in pollen.

It localises to the cell membrane. Functionally, plant-specific actin binding protein. Associates with F-actin at the plasma membrane in growing pollen tubes. May be part of a membrane-cytoskeletal adapter complex. This chain is Protein NETWORKED 2A, found in Arabidopsis thaliana (Mouse-ear cress).